We begin with the raw amino-acid sequence, 353 residues long: MARILLNDVRKSYAGNQVIHGITMEIADGEFVVIVGPSGCGKSTLLRMVAGLEAISAGTVEIGGKVVNDLEPRQRDIAMVFQNYALYPHMSVRENMAYGLKIAKLPKTEIEARVAKAATMLELEPYLDRKPRALSGGQRQRVAMGRALVREPAALLLDEPLSNLDAKLRVQMRLQIKEMHLRTGQTTLYVTHDQVEAMTLADRLIVMNKGVAEQIATPLEVYERPASEFVAGFIGSPAMNIFTVDAADGRVTLPGGAVLPLPVPRGGDLRLGLRPEHLRTAQPGEAAIPVVLRSVERLGADAFGYGMIEGSEVPMVLRLPGTSQLSRGDRVEAVPDPAHLHFFDPVSGRRIEG.

Residues 4 to 234 form the ABC transporter domain; that stretch reads ILLNDVRKSY…PASEFVAGFI (231 aa). Residue 36-43 coordinates ATP; it reads GPSGCGKS.

Belongs to the ABC transporter superfamily. sn-glycerol-3-phosphate importer (TC 3.A.1.1.3) family. In terms of assembly, the complex is composed of two ATP-binding proteins (UgpC), two transmembrane proteins (UgpA and UgpE) and a solute-binding protein (UgpB).

It is found in the cell inner membrane. The enzyme catalyses sn-glycerol 3-phosphate(out) + ATP + H2O = sn-glycerol 3-phosphate(in) + ADP + phosphate + H(+). Its function is as follows. Part of the ABC transporter complex UgpBAEC involved in sn-glycerol-3-phosphate (G3P) import. Responsible for energy coupling to the transport system. The sequence is that of sn-glycerol-3-phosphate import ATP-binding protein UgpC from Paracoccus denitrificans (strain Pd 1222).